Here is a 62-residue protein sequence, read N- to C-terminus: uncharacterized protein (62 aa).

A helical transmembrane segment spans residues 37-57 (FILGVILLGVIIESITLLVVY).

The protein resides in the membrane. This is an uncharacterized protein from Dictyostelium discoideum (Social amoeba).